A 363-amino-acid chain; its full sequence is Heat-inducible transcription repressor HrcA (363 aa).

The protein belongs to the HrcA family.

Functionally, negative regulator of class I heat shock genes (grpE-dnaK-dnaJ and groELS operons). Prevents heat-shock induction of these operons. This is Heat-inducible transcription repressor HrcA from Rhizobium radiobacter (Agrobacterium tumefaciens).